The following is a 284-amino-acid chain: MDAIKKKMQAMKLEKDNAMDRALLCEQQARDANLRAEKAEEEARSLQKKTQQIENDLDQTMEQLMQVNAKLDEKDKALQNAESEVAALNRRIQLLEEDLERSEERLATATAKLAEASQADDESERARKILESKGLADEERMDALENQLKEARFMAEEADKKYDEVARKLAMVEADLERAEERAESGESKIVELEEELRVVGNNLKSLEVSEEKANLREEEYKQQIKTLTTRLKEAEARAEFAERSVQKLQKEVDRLEDELVHEKEKYKFICDDLDMTFTELVGY.

Residues 1 to 266 (MDAIKKKMQA…EDELVHEKEK (266 aa)) adopt a coiled-coil conformation.

It belongs to the tropomyosin family. As to quaternary structure, homodimer.

In terms of biological role, tropomyosin, in association with the troponin complex, plays a central role in the calcium dependent regulation of muscle contraction. This is Tropomyosin Per a 7.0103 from Periplaneta americana (American cockroach).